A 603-amino-acid chain; its full sequence is MESDLEFSNIVSVLKLVEATTQRTVMAKALSSLLAKTPPQVIDKVIYFLLGSLRPDWEGVELGLAERLTLRAISMATGLPIRQVEELYKKLGDAGEVAKRAAEIKRSKGGGGTIFDFIDTGPKRRLTISKVYDTLMAIAKASGEGAQDTKVKLLSSLLTDAEPDEAKYITRFVIGRLRLGVADMTILDALSDAFDVNRDLLEKAYHVYPDLGKIAKTLAEGGEEAVKAIKVTPGVPIQPMLAERLSSPKEILNKLGGVAICEFKYDGERMQIHKLKDGTVKIFSRRMEDITNQYPDVAEYAREAIDAEEFIVEGEGVAIDPDTGEFKPFQELMHRKRKHNIKEAIEEYPINLYLFDVMYVNGQDLTDLPLPDRKKVLFSIIKPHEHVHHADWIITDDADSLEKFFLDAISSGCEGVMCKSVKLGSVYEMGARGWLWIKYKRDYKSELSDTMDLVVVGAFWGRGKRAGTYGALLLAAYDPDSDQFYTVCKVGSGFTDEDLKKLPQMLEPYKIPHRHPRVVSKMEPDIWFTPGLVLEITGAEITMSPLHTCCSVMLKGDVGLAIRFPRFTGRYRTDKRPEDATTVKEIFEMYSNQKKVKLTDQVP.

E262 lines the ATP pocket. K264 functions as the N6-AMP-lysine intermediate in the catalytic mechanism. Residues R269, R285, E315, F355, R432, and K438 each contribute to the ATP site.

Belongs to the ATP-dependent DNA ligase family. Mg(2+) serves as cofactor.

The enzyme catalyses ATP + (deoxyribonucleotide)n-3'-hydroxyl + 5'-phospho-(deoxyribonucleotide)m = (deoxyribonucleotide)n+m + AMP + diphosphate.. DNA ligase that seals nicks in double-stranded DNA during DNA replication, DNA recombination and DNA repair. The polypeptide is DNA ligase (Caldivirga maquilingensis (strain ATCC 700844 / DSM 13496 / JCM 10307 / IC-167)).